A 587-amino-acid chain; its full sequence is Aspartate--tRNA ligase (587 aa).

Glutamate 173 is an L-aspartate binding site. Residues 197–200 (QTLK) are aspartate. Residue arginine 219 participates in L-aspartate binding. ATP-binding positions include 219–221 (RDE) and glutamine 228. Histidine 446 contributes to the L-aspartate binding site. Position 480 (glutamate 480) interacts with ATP. Arginine 487 is a binding site for L-aspartate. Residue 532-535 (GLDR) coordinates ATP.

The protein belongs to the class-II aminoacyl-tRNA synthetase family. Type 1 subfamily. In terms of assembly, homodimer.

The protein localises to the cytoplasm. The catalysed reaction is tRNA(Asp) + L-aspartate + ATP = L-aspartyl-tRNA(Asp) + AMP + diphosphate. Functionally, catalyzes the attachment of L-aspartate to tRNA(Asp) in a two-step reaction: L-aspartate is first activated by ATP to form Asp-AMP and then transferred to the acceptor end of tRNA(Asp). The sequence is that of Aspartate--tRNA ligase from Phocaeicola vulgatus (strain ATCC 8482 / DSM 1447 / JCM 5826 / CCUG 4940 / NBRC 14291 / NCTC 11154) (Bacteroides vulgatus).